A 533-amino-acid chain; its full sequence is Na(+)/H(+) antiporter NhaB (533 aa).

The next 11 helical transmembrane spans lie at 10–30 (IGNF…SFLI), 67–87 (PGGL…SQVL), 98–118 (LLLV…LFVF), 131–165 (VSLL…FYSI), 209–229 (LLMH…VGEP), 247–267 (IRMS…CFIV), 310–330 (AFVG…VGLI), 355–375 (EEAL…AVII), 396–416 (LVIF…VFVG), 454–474 (ATPN…APLI), and 481–501 (MVWM…MAIQ).

The protein belongs to the NhaB Na(+)/H(+) (TC 2.A.34) antiporter family.

The protein resides in the cell inner membrane. The enzyme catalyses 2 Na(+)(in) + 3 H(+)(out) = 2 Na(+)(out) + 3 H(+)(in). Its function is as follows. Na(+)/H(+) antiporter that extrudes sodium in exchange for external protons. This is Na(+)/H(+) antiporter NhaB from Shewanella sp. (strain ANA-3).